The chain runs to 644 residues: Cell pattern formation-associated protein StuA (644 aa).

Over residues 18 to 33 (ATAHAPASAAPSGISH) the composition is skewed to low complexity. Disordered stretches follow at residues 18 to 58 (ATAH…PGYP) and 86 to 120 (QLPAMSSSGPSPSLSGAQSYAPHSFDHTGQVAPPG). Residues 38 to 47 (PQSSMMQPGQ) are compositionally biased toward polar residues. The span at 87-104 (LPAMSSSGPSPSLSGAQS) shows a compositional bias: low complexity. The HTH APSES-type domain maps to 124 to 230 (RVTATLWEDE…HDIGALLYHP (107 aa)). The H-T-H motif DNA-binding region spans 158 to 179 (GTKLLNVAGMTRGRRDGILKSE). A disordered region spans residues 239 to 644 (GSAAMAAVDR…HTMTAQRARR (406 aa)). The span at 253 to 269 (SMQTQRYISGPTTSQPP) shows a compositional bias: polar residues. A compositionally biased stretch (low complexity) spans 315-328 (SASSIMGMSNSGSS). Polar residues-rich tracts occupy residues 334-357 (ANVQTPQGSQPLSIDTGLSNTRSV), 371-383 (QAISYGSNQSYDN), and 395-404 (PGQYNTQGQS). A compositionally biased stretch (basic and acidic residues) spans 456 to 465 (EGDHEHDNEY). The span at 509–524 (GSGRATPRTTTTSQTQ) shows a compositional bias: low complexity. The span at 525–544 (WNSGYPTPQRQGPPSSNLYN) shows a compositional bias: polar residues. Residues 584 to 612 (KRGRDDDDEDPYRPDSVQSDDMGGLKRRK) are nuclear localization domain. Residues 635-644 (HTMTAQRARR) show a composition bias toward polar residues.

The protein belongs to the EFG1/PHD1/stuA family.

It is found in the nucleus. In terms of biological role, transcription factor that regulates asexual reproduction. Binds the StuA-response elements (StRE) with the consensus sequence 5'-(A/T)CGCG(T/A)N(A/C)-3' at the promoters of target genes. Required for pathogenicity and positively regulates the synthesis of the mycotoxin alternariol. Acts as a positive regulator of Tox3 but is not required for the expression of ToxA. Also acts as a central regulator of carbon metabolism including glycolysis, the TCA cycle, and amino acid synthesis. In Phaeosphaeria nodorum (strain SN15 / ATCC MYA-4574 / FGSC 10173) (Glume blotch fungus), this protein is Cell pattern formation-associated protein StuA.